The chain runs to 363 residues: Pyrimidine monooxygenase RutA (363 aa).

Residues 49–50 (IK), Asn-115, Glu-124, 140–141 (RY), and Ser-190 contribute to the FMN site.

It belongs to the NtaA/SnaA/DszA monooxygenase family. RutA subfamily.

The enzyme catalyses uracil + FMNH2 + NADH + O2 = (Z)-3-ureidoacrylate + FMN + NAD(+) + H2O + H(+). It catalyses the reaction thymine + FMNH2 + NADH + O2 = (Z)-2-methylureidoacrylate + FMN + NAD(+) + H2O + H(+). Functionally, catalyzes the pyrimidine ring opening between N-3 and C-4 by an unusual flavin hydroperoxide-catalyzed mechanism, adding oxygen atoms in the process to yield ureidoacrylate peracid, that immediately reacts with FMN forming ureidoacrylate and FMN-N(5)-oxide. The FMN-N(5)-oxide reacts spontaneously with NADH to produce FMN. Requires the flavin reductase RutF to regenerate FMN in vivo. This Pantoea ananatis (strain LMG 20103) protein is Pyrimidine monooxygenase RutA.